We begin with the raw amino-acid sequence, 148 residues long: Large ribosomal subunit protein bL9 (148 aa).

Belongs to the bacterial ribosomal protein bL9 family.

Binds to the 23S rRNA. The chain is Large ribosomal subunit protein bL9 from Thermus thermophilus (strain ATCC BAA-163 / DSM 7039 / HB27).